The chain runs to 298 residues: Sulfate adenylyltransferase subunit 2 (298 aa).

Composition is skewed to basic and acidic residues over residues 272–282 (RTSERQGRLID) and 289–298 (MEKKKQEGYF). Residues 272–298 (RTSERQGRLIDSDSAGSMEKKKQEGYF) are disordered.

The protein belongs to the PAPS reductase family. CysD subfamily. Heterodimer composed of CysD, the smaller subunit, and CysN.

It catalyses the reaction sulfate + ATP + H(+) = adenosine 5'-phosphosulfate + diphosphate. The protein operates within sulfur metabolism; hydrogen sulfide biosynthesis; sulfite from sulfate: step 1/3. Its function is as follows. With CysN forms the ATP sulfurylase (ATPS) that catalyzes the adenylation of sulfate producing adenosine 5'-phosphosulfate (APS) and diphosphate, the first enzymatic step in sulfur assimilation pathway. APS synthesis involves the formation of a high-energy phosphoric-sulfuric acid anhydride bond driven by GTP hydrolysis by CysN coupled to ATP hydrolysis by CysD. This chain is Sulfate adenylyltransferase subunit 2, found in Burkholderia lata (strain ATCC 17760 / DSM 23089 / LMG 22485 / NCIMB 9086 / R18194 / 383).